Here is a 120-residue protein sequence, read N- to C-terminus: Ribosome-binding factor A (120 aa).

This sequence belongs to the RbfA family. As to quaternary structure, monomer. Binds 30S ribosomal subunits, but not 50S ribosomal subunits or 70S ribosomes.

Its subcellular location is the cytoplasm. One of several proteins that assist in the late maturation steps of the functional core of the 30S ribosomal subunit. Associates with free 30S ribosomal subunits (but not with 30S subunits that are part of 70S ribosomes or polysomes). Required for efficient processing of 16S rRNA. May interact with the 5'-terminal helix region of 16S rRNA. This is Ribosome-binding factor A from Chlamydia abortus (strain DSM 27085 / S26/3) (Chlamydophila abortus).